Here is a 553-residue protein sequence, read N- to C-terminus: Urocanate hydratase (553 aa).

Residues 45-46 (GG), Gln123, 169-171 (GMG), Asp189, Arg194, 235-236 (NA), 256-260 (QTSAH), 266-267 (YV), Tyr315, and Gly485 each bind NAD(+).

The protein belongs to the urocanase family. NAD(+) serves as cofactor.

The protein resides in the cytoplasm. It catalyses the reaction 4-imidazolone-5-propanoate = trans-urocanate + H2O. It participates in amino-acid degradation; L-histidine degradation into L-glutamate; N-formimidoyl-L-glutamate from L-histidine: step 2/3. In terms of biological role, catalyzes the conversion of urocanate to 4-imidazolone-5-propionate. This is Urocanate hydratase from Staphylococcus aureus (strain Mu50 / ATCC 700699).